The following is an 81-amino-acid chain: Sulfur carrier protein TusA (81 aa).

Cysteine 19 serves as the catalytic Cysteine persulfide intermediate.

Belongs to the sulfur carrier protein TusA family.

Its subcellular location is the cytoplasm. Functionally, sulfur carrier protein which probably makes part of a sulfur-relay system. The polypeptide is Sulfur carrier protein TusA (Shewanella sediminis (strain HAW-EB3)).